Consider the following 534-residue polypeptide: Inosine-5'-monophosphate dehydrogenase (534 aa).

CBS domains are found at residues 117 to 181 and 190 to 255; these read YVMQ…GTPI and TTPI…PMAS. NAD(+) contacts are provided by residues 292 to 294 and 342 to 344; these read DSS and GMG. 2 residues coordinate K(+): Gly344 and Gly346. Ser347 is a binding site for IMP. K(+) is bound at residue Cys349. The active-site Thioimidate intermediate is Cys349. Residues 382-384, 405-406, and 430-434 each bind IMP; these read DGG, GG, and YRGMG. The Proton acceptor role is filled by Arg448. Gln461 serves as a coordination point for IMP. K(+)-binding residues include Glu520, Gly521, and Gly522.

This sequence belongs to the IMPDH/GMPR family. In terms of assembly, homotetramer. The cofactor is K(+).

It is found in the cytoplasm. The enzyme catalyses IMP + NAD(+) + H2O = XMP + NADH + H(+). The protein operates within purine metabolism; XMP biosynthesis via de novo pathway; XMP from IMP: step 1/1. Mycophenolic acid (MPA) is a non-competitive inhibitor that prevents formation of the closed enzyme conformation by binding to the same site as the amobile flap. In contrast, mizoribine monophosphate (MZP) is a competitive inhibitor that induces the closed conformation. MPA is a potent inhibitor of mammalian IMPDHs but a poor inhibitor of the bacterial enzymes. MZP is a more potent inhibitor of bacterial IMPDH. Functionally, catalyzes the conversion of inosine 5'-phosphate (IMP) to xanthosine 5'-phosphate (XMP), the first committed and rate-limiting step in the de novo synthesis of guanine nucleotides, and therefore plays an important role in the regulation of cell growth. This is Inosine-5'-monophosphate dehydrogenase from Caenorhabditis elegans.